The primary structure comprises 353 residues: Ubiquinol oxidase 2, mitochondrial (353 aa).

A mitochondrion-targeting transit peptide spans 1–21 (MSQLITKAALRVLLVCGRGNC). A helical transmembrane segment spans residues 178–198 (AMMLETVAAVPGMVGGMLLHL). The Fe cation site is built by E182, E221, and H224. The helical transmembrane segment at 240 to 260 (LLVMLVQGIFFNSFFVCYVIS) threads the bilayer. Residues E272, E323, and H326 each contribute to the Fe cation site.

Belongs to the alternative oxidase family. As to quaternary structure, homodimer; disulfide-linked. Fe cation serves as cofactor. In terms of tissue distribution, maximally expressed in dry seeds. Detected in roots, stems and leaves.

The protein localises to the mitochondrion inner membrane. It carries out the reaction 2 a ubiquinol + O2 = 2 a ubiquinone + 2 H2O. In terms of biological role, catalyzes the cyanide-resistant oxidation of ubiquinol and the reduction of molecular oxygen to water, but does not translocate protons and consequently is not linked to oxidative phosphorylation. May increase respiration when the cytochrome respiratory pathway is restricted, or in response to low temperatures. This Arabidopsis thaliana (Mouse-ear cress) protein is Ubiquinol oxidase 2, mitochondrial (AOX2).